Here is a 297-residue protein sequence, read N- to C-terminus: ER membrane protein complex subunit 2-A (297 aa).

TPR repeat units lie at residues 87–120 (HRVK…DPTN), 155–188 (QEAW…NPHN), and 192–225 (YQQF…NNHN).

The protein belongs to the EMC2 family. In terms of assembly, component of the ER membrane protein complex (EMC).

It is found in the endoplasmic reticulum membrane. Functionally, part of the endoplasmic reticulum membrane protein complex (EMC) that enables the energy-independent insertion into endoplasmic reticulum membranes of newly synthesized membrane proteins. Preferentially accommodates proteins with transmembrane domains that are weakly hydrophobic or contain destabilizing features such as charged and aromatic residues. Involved in the cotranslational insertion of multi-pass membrane proteins in which stop-transfer membrane-anchor sequences become ER membrane spanning helices. It is also required for the post-translational insertion of tail-anchored/TA proteins in endoplasmic reticulum membranes. By mediating the proper cotranslational insertion of N-terminal transmembrane domains in an N-exo topology, with translocated N-terminus in the lumen of the ER, controls the topology of multi-pass membrane proteins. By regulating the insertion of various proteins in membranes, it is indirectly involved in many cellular processes. In Xenopus laevis (African clawed frog), this protein is ER membrane protein complex subunit 2-A (emc2-a).